We begin with the raw amino-acid sequence, 683 residues long: Protein kinase C eta type (683 aa).

Residues 1 to 118 (MSSGTMKFNG…LRTTGASDTF (118 aa)) form the C2 domain. 2 positions are modified to phosphoserine; by autocatalysis: serine 28 and serine 32. Phorbol-ester/DAG-type zinc fingers lie at residues 171 to 222 (GHKF…VTAC) and 245 to 295 (PHKF…APNC). A Phosphoserine modification is found at serine 317. The disordered stretch occupies residues 320–342 (SKLVSRSTLRRQGKESSKEGNGI). In terms of domain architecture, Protein kinase spans 355 to 614 (FEFIRVLGKG…EHAILRHPFF (260 aa)). Residues 361–369 (LGKGSFGKV) and lysine 384 each bind ATP. Aspartate 479 acts as the Proton acceptor in catalysis. Threonine 513 is subject to Phosphothreonine; by PDPK1. The 69-residue stretch at 615-683 (KEIDWAQLNH…FSYVSPELQP (69 aa)) folds into the AGC-kinase C-terminal domain. Position 656 is a phosphothreonine (threonine 656). Serine 675 bears the Phosphoserine mark.

This sequence belongs to the protein kinase superfamily. AGC Ser/Thr protein kinase family. PKC subfamily. Interacts with FYN. Interacts with RALA. Interacts with DGKQ. Interacts with PRKCH upstream open reading frame 2; the interaction leads to inhibition of kinase activity. Most abundant in lung, less in heart and skin.

It localises to the cytoplasm. It catalyses the reaction L-seryl-[protein] + ATP = O-phospho-L-seryl-[protein] + ADP + H(+). The catalysed reaction is L-threonyl-[protein] + ATP = O-phospho-L-threonyl-[protein] + ADP + H(+). Novel PKCs (PRKCD, PRKCE, PRKCH and PRKCQ) are calcium-insensitive, but activated by diacylglycerol (DAG) and phosphatidylserine. Three specific sites; Thr-513 (activation loop of the kinase domain), Thr-656 (turn motif) and Ser-675 (hydrophobic region), need to be phosphorylated for its full activation. Inhibited by PRKCH upstream open reading frame 2. Functionally, calcium-independent, phospholipid- and diacylglycerol (DAG)-dependent serine/threonine-protein kinase that is involved in the regulation of cell differentiation in keratinocytes and pre-B cell receptor, mediates regulation of epithelial tight junction integrity and foam cell formation, and is required for glioblastoma proliferation and apoptosis prevention in MCF-7 cells. In keratinocytes, binds and activates the tyrosine kinase FYN, which in turn blocks epidermal growth factor receptor (EGFR) signaling and leads to keratinocyte growth arrest and differentiation. Associates with the cyclin CCNE1-CDK2-CDKN1B complex and inhibits CDK2 kinase activity, leading to RB1 dephosphorylation and thereby G1 arrest in keratinocytes. In association with RALA activates actin depolymerization, which is necessary for keratinocyte differentiation. In the pre-B cell receptor signaling, functions downstream of BLNK by up-regulating IRF4, which in turn activates L chain gene rearrangement. Regulates epithelial tight junctions (TJs) by phosphorylating occludin (OCLN) on threonine residues, which is necessary for the assembly and maintenance of TJs. In association with PLD2 and via TLR4 signaling, is involved in lipopolysaccharide (LPS)-induced RGS2 down-regulation and foam cell formation. Upon PMA stimulation, mediates glioblastoma cell proliferation by activating the mTOR pathway, the PI3K/AKT pathway and the ERK1-dependent phosphorylation of ELK1. Involved in the protection of glioblastoma cells from irradiation-induced apoptosis by preventing caspase-9 activation. In camptothecin-treated MCF-7 cells, regulates NF-kappa-B upstream signaling by activating IKBKB, and confers protection against DNA damage-induced apoptosis. Promotes oncogenic functions of ATF2 in the nucleus while blocking its apoptotic function at mitochondria. Phosphorylates ATF2 which promotes its nuclear retention and transcriptional activity and negatively regulates its mitochondrial localization. This is Protein kinase C eta type (PRKCH) from Homo sapiens (Human).